The sequence spans 1070 residues: DNA-directed RNA polymerase subunit beta (1070 aa).

Belongs to the RNA polymerase beta chain family. In plastids the minimal PEP RNA polymerase catalytic core is composed of four subunits: alpha, beta, beta', and beta''. When a (nuclear-encoded) sigma factor is associated with the core the holoenzyme is formed, which can initiate transcription.

The protein localises to the plastid. It is found in the chloroplast. It catalyses the reaction RNA(n) + a ribonucleoside 5'-triphosphate = RNA(n+1) + diphosphate. Functionally, DNA-dependent RNA polymerase catalyzes the transcription of DNA into RNA using the four ribonucleoside triphosphates as substrates. This is DNA-directed RNA polymerase subunit beta from Spinacia oleracea (Spinach).